Here is a 906-residue protein sequence, read N- to C-terminus: Protein translocase subunit SecA (906 aa).

Residues Q89, 107–111 (GEGKT), and D501 contribute to the ATP site. Zn(2+)-binding residues include C891, C893, C902, and H903.

The protein belongs to the SecA family. Monomer and homodimer. Part of the essential Sec protein translocation apparatus which comprises SecA, SecYEG and auxiliary proteins SecDF-YajC and YidC. The cofactor is Zn(2+).

The protein resides in the cell inner membrane. It localises to the cytoplasm. The enzyme catalyses ATP + H2O + cellular proteinSide 1 = ADP + phosphate + cellular proteinSide 2.. Part of the Sec protein translocase complex. Interacts with the SecYEG preprotein conducting channel. Has a central role in coupling the hydrolysis of ATP to the transfer of proteins into and across the cell membrane, serving both as a receptor for the preprotein-SecB complex and as an ATP-driven molecular motor driving the stepwise translocation of polypeptide chains across the membrane. The sequence is that of Protein translocase subunit SecA from Parvibaculum lavamentivorans (strain DS-1 / DSM 13023 / NCIMB 13966).